We begin with the raw amino-acid sequence, 515 residues long: Bifunctional purine biosynthesis protein PurH (515 aa).

Positions Met1–Val145 constitute an MGS-like domain.

The protein belongs to the PurH family.

It catalyses the reaction (6R)-10-formyltetrahydrofolate + 5-amino-1-(5-phospho-beta-D-ribosyl)imidazole-4-carboxamide = 5-formamido-1-(5-phospho-D-ribosyl)imidazole-4-carboxamide + (6S)-5,6,7,8-tetrahydrofolate. The catalysed reaction is IMP + H2O = 5-formamido-1-(5-phospho-D-ribosyl)imidazole-4-carboxamide. It participates in purine metabolism; IMP biosynthesis via de novo pathway; 5-formamido-1-(5-phospho-D-ribosyl)imidazole-4-carboxamide from 5-amino-1-(5-phospho-D-ribosyl)imidazole-4-carboxamide (10-formyl THF route): step 1/1. It functions in the pathway purine metabolism; IMP biosynthesis via de novo pathway; IMP from 5-formamido-1-(5-phospho-D-ribosyl)imidazole-4-carboxamide: step 1/1. The protein is Bifunctional purine biosynthesis protein PurH of Streptococcus pyogenes serotype M2 (strain MGAS10270).